A 389-amino-acid chain; its full sequence is Na(+)/H(+) antiporter NhaA 1 (389 aa).

A run of 12 helical transmembrane segments spans residues 12–32 (VLNE…ALLV), 62–82 (FLLW…GLEL), 97–117 (IVLP…LFVL), 128–148 (GWAI…MMCG), 157–177 (IFLL…IAIF), 184–204 (IVAF…NILG), 220–240 (ISVL…AFFI), 260–280 (FWLA…VNLS), 282–302 (IDIG…LFVG), 305–325 (AGVF…LPQG), 331–351 (LYGV…IDGL), and 365–385 (LAIL…LKFF).

The protein belongs to the NhaA Na(+)/H(+) (TC 2.A.33) antiporter family.

Its subcellular location is the cell inner membrane. The catalysed reaction is Na(+)(in) + 2 H(+)(out) = Na(+)(out) + 2 H(+)(in). In terms of biological role, na(+)/H(+) antiporter that extrudes sodium in exchange for external protons. The chain is Na(+)/H(+) antiporter NhaA 1 from Campylobacter jejuni subsp. jejuni serotype O:23/36 (strain 81-176).